Here is a 408-residue protein sequence, read N- to C-terminus: Protein SPATA31F3 (408 aa).

The chain crosses the membrane as a helical span at residues 11–31 (VGYPFYTYGSIIIIALIIWQV). The interval 51–71 (QKVKQRAKEKTPRARRHSRKE) is disordered. Ser-152 carries the phosphoserine modification. 2 disordered regions span residues 297-316 (TKTK…MKGA) and 351-408 (LPLS…SASS). A compositionally biased stretch (polar residues) spans 351-392 (LPLSSGSSKRSPLLTCATQPENPSHVSVSTSAEGTCLPQEST).

This sequence belongs to the SPATA31 family.

The protein localises to the membrane. The polypeptide is Protein SPATA31F3 (SPATA31F3) (Bos taurus (Bovine)).